The sequence spans 743 residues: MEAVAVAAAVGVLLLAGAGGAAGDEAREAAAVRALVARLLGPGPAADFSVSVERALAAKPGLDTYSLGGGGAARVRVRGSTGVAAAAGLHRYLRDFCGCHVAWSGSQLRLPRPLPAVPGELTEATPNRYRYYQNVCTQSYSFVWWDWARWEREIDWMALNGINLALAWSGQEAIWQRVYLALGLTQAEINEFFTGPAFLAWGRMGNLHTWDGPLPPSWHIKQLYLQHRVLDQMRSFGMTPVLPAFAGHVPEAVTRVFPQVNVTKMGSWGHFNCSYSCSFLLAPEDPIFPIIGSLFLRELIKEFGTDHIYGADTFNEMQPPSSEPSYLAAATTAVYEAMTAVDTEAVWLLQGWLFQHQPQFWGPAQIRAVLGAVPRGRLLVLDLFAESQPVYTRTASFQGQPFIWCMLHNFGGNHGLFGALEAVNGGPEAARLFPNSTMVGTGMAPEGISQNEVVYSLMAELGWRKDPVPDLAAWVTSFAARRYGVSHPDAGAAWRLLLRSVYNCSGEACRGHNRSPLVRRPSLQMNTSIWYNRSDVFEAWRLLLTSAPSLATSPAFRYDLLDLTRQAVQELVSLYYEEARSAYLSKELASLLRAGGVLAYELLPALDEVLASDSRFLLGSWLEQARAAAVSEAEADFYEQNSRYQLTLWGPEGNILDYANKQLAGLVANYYTPRWRLFLEALVDSVAQGIPFQQHQFDKNVFQLEQAFVLSKQRYPSQPRGDTVDLAKKIFLKYYPRWVAGSW.

The N-terminal stretch at 1 to 23 (MEAVAVAAAVGVLLLAGAGGAAG) is a signal peptide. N-linked (GlcNAc...) asparagine glycans are attached at residues Asn-261, Asn-272, Asn-435, Asn-503, Asn-526, and Asn-532.

Belongs to the glycosyl hydrolase 89 family. In terms of assembly, monomer and homodimer. Liver, ovary, peripheral blood leukocytes, testis, prostate, spleen, colon, lung, placenta and kidney.

The protein localises to the lysosome. It carries out the reaction Hydrolysis of terminal non-reducing N-acetyl-D-glucosamine residues in N-acetyl-alpha-D-glucosaminides.. In terms of biological role, involved in the degradation of heparan sulfate. This chain is Alpha-N-acetylglucosaminidase (NAGLU), found in Homo sapiens (Human).